A 428-amino-acid polypeptide reads, in one-letter code: Adenylosuccinate synthetase (428 aa).

GTP-binding positions include 12–18 (GDEGKGK) and 40–42 (GHT). The Proton acceptor role is filled by D13. Mg(2+) is bound by residues D13 and G40. Residues 13-16 (DEGK), 38-41 (NAGH), T129, R143, Q224, T239, and R303 each bind IMP. The active-site Proton donor is H41. Residue 299-305 (VTTGRIR) coordinates substrate. GTP-binding positions include R305, 331–333 (KVD), and 410–412 (AYG).

Belongs to the adenylosuccinate synthetase family. In terms of assembly, homodimer. Mg(2+) serves as cofactor.

The protein resides in the cytoplasm. It catalyses the reaction IMP + L-aspartate + GTP = N(6)-(1,2-dicarboxyethyl)-AMP + GDP + phosphate + 2 H(+). The protein operates within purine metabolism; AMP biosynthesis via de novo pathway; AMP from IMP: step 1/2. Functionally, plays an important role in the de novo pathway of purine nucleotide biosynthesis. Catalyzes the first committed step in the biosynthesis of AMP from IMP. The protein is Adenylosuccinate synthetase of Francisella tularensis subsp. novicida (strain U112).